Reading from the N-terminus, the 288-residue chain is Protein PGR (288 aa).

7 consecutive transmembrane segments (helical) span residues 1-21 (METS…LIAF), 29-49 (LDLS…TAGF), 91-111 (VLCN…LTGW), 123-143 (IVTA…GDTW), 177-197 (LLAA…FGLF), 210-230 (LLVI…DSIL), and 268-288 (VNFV…VYIF).

Belongs to the TMEM19 family. In terms of tissue distribution, expressed in the vasculature of leaves, roots, inflorescences, siliques, anther filaments and sepals. Detected primarily in the phloem tissues, including in the root ans shoot apical meristems.

The protein localises to the cell membrane. In terms of biological role, involved in the glucose-triggered developmental leaf growth process. The polypeptide is Protein PGR (Arabidopsis thaliana (Mouse-ear cress)).